The primary structure comprises 209 residues: Small ribosomal subunit protein uS3c (209 aa).

One can recognise a KH type-2 domain in the interval 39-109 (IRSCIEKQLH…QIRINLIEIT (71 aa)).

The protein belongs to the universal ribosomal protein uS3 family. In terms of assembly, part of the 30S ribosomal subunit.

It localises to the plastid. The protein localises to the chloroplast. The polypeptide is Small ribosomal subunit protein uS3c (rps3) (Gracilaria tenuistipitata (Red alga)).